The following is a 676-amino-acid chain: Nicastrin (676 aa).

A signal peptide spans 1–28 (MAMGLIRLLSIAFTLVLLSILPLHLSLA). The Extracellular segment spans residues 29–644 (DEITSIESVP…VYTVQHSAYD (616 aa)). 7 N-linked (GlcNAc...) asparagine glycosylation sites follow: asparagine 58, asparagine 336, asparagine 371, asparagine 444, asparagine 480, asparagine 555, and asparagine 611. The helical transmembrane segment at 645 to 665 (NAVLVAGITVTTLAYIGILAA) threads the bilayer. At 666–676 (KSIITKALKQD) the chain is on the cytoplasmic side.

It belongs to the nicastrin family. As to quaternary structure, probable component of the gamma-secretase complex, a complex composed of a presenilin homodimer, nicastrin, APH1 and PEN2.

It is found in the membrane. Its function is as follows. Probable subunit of the gamma-secretase complex, an endoprotease complex that catalyzes the intramembrane cleavage of integral membrane proteins such as Notch. This chain is Nicastrin, found in Arabidopsis thaliana (Mouse-ear cress).